Consider the following 404-residue polypeptide: Serine/threonine transporter SstT (404 aa).

The next 9 membrane-spanning stretches (helical) occupy residues 17–37 (IGIG…VTAI), 44–64 (FVGA…VQAI), 75–95 (ITLI…VAVI), 138–158 (ALAT…GLAL), 179–199 (IVVW…FSTV), 212–232 (LLIL…NPLL), 287–307 (IPLG…VLTL), 319–339 (FLTA…ASGV), and 354–374 (FGIS…VGVI).

This sequence belongs to the dicarboxylate/amino acid:cation symporter (DAACS) (TC 2.A.23) family.

It is found in the cell membrane. The enzyme catalyses L-serine(in) + Na(+)(in) = L-serine(out) + Na(+)(out). The catalysed reaction is L-threonine(in) + Na(+)(in) = L-threonine(out) + Na(+)(out). Functionally, involved in the import of serine and threonine into the cell, with the concomitant import of sodium (symport system). This Streptococcus equi subsp. zooepidemicus (strain MGCS10565) protein is Serine/threonine transporter SstT.